The sequence spans 185 residues: Ribosome-recycling factor (185 aa).

It belongs to the RRF family.

Its subcellular location is the cytoplasm. Functionally, responsible for the release of ribosomes from messenger RNA at the termination of protein biosynthesis. May increase the efficiency of translation by recycling ribosomes from one round of translation to another. The protein is Ribosome-recycling factor of Bacillus licheniformis (strain ATCC 14580 / DSM 13 / JCM 2505 / CCUG 7422 / NBRC 12200 / NCIMB 9375 / NCTC 10341 / NRRL NRS-1264 / Gibson 46).